Here is a 496-residue protein sequence, read N- to C-terminus: Ribose import ATP-binding protein RbsA (496 aa).

ABC transporter domains follow at residues 5–242 and 252–496; these read IEMK…VGRS and SQIG…TGGE. 37-44 provides a ligand contact to ATP; it reads GENGAGKS.

The protein belongs to the ABC transporter superfamily. Ribose importer (TC 3.A.1.2.1) family. As to quaternary structure, the complex is composed of an ATP-binding protein (RbsA), two transmembrane proteins (RbsC) and a solute-binding protein (RbsB).

The protein resides in the cell membrane. The enzyme catalyses D-ribose(out) + ATP + H2O = D-ribose(in) + ADP + phosphate + H(+). Its function is as follows. Part of the ABC transporter complex RbsABC involved in ribose import. Responsible for energy coupling to the transport system. This chain is Ribose import ATP-binding protein RbsA, found in Bacillus cereus (strain ATCC 14579 / DSM 31 / CCUG 7414 / JCM 2152 / NBRC 15305 / NCIMB 9373 / NCTC 2599 / NRRL B-3711).